Reading from the N-terminus, the 330-residue chain is Sulfate/thiosulfate import ATP-binding protein CysA (330 aa).

Residues 3-237 (IEIRNINKQF…PASEFVYHFL (235 aa)) form the ABC transporter domain. Residue 35–42 (GPSGCGKT) participates in ATP binding.

This sequence belongs to the ABC transporter superfamily. Sulfate/tungstate importer (TC 3.A.1.6) family. As to quaternary structure, the complex is composed of two ATP-binding proteins (CysA), two transmembrane proteins (CysT and CysW) and a solute-binding protein (CysP).

The protein localises to the cell inner membrane. It catalyses the reaction sulfate(out) + ATP + H2O = sulfate(in) + ADP + phosphate + H(+). It carries out the reaction thiosulfate(out) + ATP + H2O = thiosulfate(in) + ADP + phosphate + H(+). Its function is as follows. Part of the ABC transporter complex CysAWTP involved in sulfate/thiosulfate import. Responsible for energy coupling to the transport system. The sequence is that of Sulfate/thiosulfate import ATP-binding protein CysA from Pectobacterium atrosepticum (strain SCRI 1043 / ATCC BAA-672) (Erwinia carotovora subsp. atroseptica).